The sequence spans 248 residues: Meiotic drive suppressor wtf1 (248 aa).

The interval 30–68 (LLPEYNSDEESTLPPYSDHARVSNPPNTHRENHSSGTTD) is disordered. 4 helical membrane-spanning segments follow: residues 73–93 (FLIK…PAVC), 110–130 (WTLI…SWYF), 152–172 (IPMA…PRVT), and 186–206 (SLAD…VETV).

This sequence belongs to the WTF family. In terms of assembly, homomer. Interacts with other proteins that exhibit high sequence similarity.

The protein localises to the spore membrane. It is found in the vacuole membrane. Acts as a suppressor component of the dual wtf meiotic drive system, and can suppress but not confer meiotic drive by compatible poisons. Wtf meiotic drive systems promote unequal transmission of alleles from the parental zygote to progeny spores by encoding a poison and an antidote from the same locus; the poison is trans-acting and forms toxic aggregates in all spores within an ascus, wherease the antidote is spore-specific and targets aggregates for degradation by the vacuole. Meiotic drive by wtf systems therefore lead to poisoning of all progeny that do not inherit the dual poison/antidote allele, or express a compatible antidote. The protein is Meiotic drive suppressor wtf1 of Schizosaccharomyces pombe (Fission yeast).